Reading from the N-terminus, the 508-residue chain is RanBP-type and C3HC4-type zinc finger-containing protein 1 (508 aa).

At methionine 1 the chain carries N-acetylmethionine. Residues 1 to 218 (MDEKTKKAEE…PGCEMCCRAR (218 aa)) form an interaction with IRF3 region. The interval 1–268 (MDEKTKKAEE…NYLQHVQLEQ (268 aa)) is interaction with TAB2. Phosphoserine is present on serine 50. In terms of domain architecture, Ubiquitin-like spans 55–119 (IRLCVSVEDA…DQETLHSHGI (65 aa)). Residues 69-131 (VTIWLTVRPD…NGDGAYLYLL (63 aa)) are interaction with RNF31. Residues 163–191 (QSRGPLEPVLPKPRTNQEPGQPDAAPESP) are disordered. The RanBP2-type zinc-finger motif lies at 188-220 (PESPPVGWQCPGCTFINKPTRPGCEMCCRARPE). Residues 231 to 259 (DEEERARLAGEEEALRQYQQRKQQQQEGN) are a coiled coil. The segment at 276–504 (EPTECPVCYS…VNGIPCHPSC (229 aa)) is TRIAD supradomain. Residues cysteine 280, cysteine 283, cysteine 298, histidine 300, cysteine 303, cysteine 306, and cysteine 321 each contribute to the Zn(2+) site. Residues 280–330 (CPVCYSVLAPGEAVVLRECLHTFCRECLQGTIRNSQEAEVACPFIDSTYSC) form an RING-type 1 zinc finger. Tyrosine 328 bears the Phosphotyrosine mark. Residues cysteine 330, cysteine 369, cysteine 374, cysteine 389, cysteine 392, cysteine 397, cysteine 400, histidine 404, cysteine 409, cysteine 445, and cysteine 448 each coordinate Zn(2+). An IBR-type zinc finger spans residues 349-409 (QRFLDLGVSI…CKAIHEHMNC (61 aa)). Residues 445–474 (CPQCRIVVQKKDGCDWIRCTVCHTEICWVT) form an RING-type 2; atypical zinc finger. The active site involves cysteine 458. Positions 463 and 466 each coordinate Zn(2+).

The protein belongs to the RBR family. Component of the LUBAC complex (linear ubiquitin chain assembly complex) which consists of SHARPIN, RBCK1 and RNF31. LUBAC has a MW of approximately 600 kDa suggesting a heteromultimeric assembly of its subunits. Interacts with beta-I-type (PRKCB1) and zeta-type protein kinase C (PRKCZ). Interacts with UBE2L3. Interacts with IREB2 only in iron-rich conditions. Associates with the TNF-R1 signaling complex (TNF-RSC) in a stimulation-dependent manner. Interacts with EYA1, TAB2, TAB3, MAP3K7 TRAF6 and RIPK1. Interacts with IRF3. Auto-ubiquitinated. Auto-ubiquitination leads to degradation by the proteasome. In terms of processing, phosphorylated. In vitro, phosphorylation inhibits auto-ubiquitination activity.

The enzyme catalyses [E2 ubiquitin-conjugating enzyme]-S-ubiquitinyl-L-cysteine + [acceptor protein]-L-lysine = [E2 ubiquitin-conjugating enzyme]-L-cysteine + [acceptor protein]-N(6)-ubiquitinyl-L-lysine.. It functions in the pathway protein modification; protein ubiquitination. Functionally, E3 ubiquitin-protein ligase, which accepts ubiquitin from specific E2 ubiquitin-conjugating enzymes, such as UBE2L3/UBCM4, and then transfers it to substrates. Functions as an E3 ligase for oxidized IREB2 and both heme and oxygen are necessary for IREB2 ubiquitination. Promotes ubiquitination of TAB2 and IRF3 and their degradation by the proteasome. Component of the LUBAC complex which conjugates linear ('Met-1'-linked) polyubiquitin chains to substrates and plays a key role in NF-kappa-B activation and regulation of inflammation. LUBAC conjugates linear polyubiquitin to IKBKG and RIPK1 and is involved in activation of the canonical NF-kappa-B and the JNK signaling pathways. Linear ubiquitination mediated by the LUBAC complex interferes with TNF-induced cell death and thereby prevents inflammation. LUBAC is recruited to the TNF-R1 signaling complex (TNF-RSC) following polyubiquitination of TNF-RSC components by BIRC2 and/or BIRC3 and to conjugate linear polyubiquitin to IKBKG and possibly other components contributing to the stability of the complex. The LUBAC complex is also involved in innate immunity by conjugating linear polyubiquitin chains at the surface of bacteria invading the cytosol to form the ubiquitin coat surrounding bacteria. LUBAC is not able to initiate formation of the bacterial ubiquitin coat, and can only promote formation of linear polyubiquitins on pre-existing ubiquitin. The bacterial ubiquitin coat acts as an 'eat-me' signal for xenophagy and promotes NF-kappa-B activation. Together with OTULIN, the LUBAC complex regulates the canonical Wnt signaling during angiogenesis. Binds polyubiquitin of different linkage types. The polypeptide is RanBP-type and C3HC4-type zinc finger-containing protein 1 (Rbck1) (Mus musculus (Mouse)).